A 435-amino-acid polypeptide reads, in one-letter code: Serine--tRNA ligase (435 aa).

An L-serine-binding site is contributed by 242-244 (TAE). 273–275 (RSE) provides a ligand contact to ATP. Residue Glu296 participates in L-serine binding. 360-363 (EISS) lines the ATP pocket. Ser396 provides a ligand contact to L-serine.

It belongs to the class-II aminoacyl-tRNA synthetase family. Type-1 seryl-tRNA synthetase subfamily. As to quaternary structure, homodimer. The tRNA molecule binds across the dimer.

Its subcellular location is the cytoplasm. It carries out the reaction tRNA(Ser) + L-serine + ATP = L-seryl-tRNA(Ser) + AMP + diphosphate + H(+). The enzyme catalyses tRNA(Sec) + L-serine + ATP = L-seryl-tRNA(Sec) + AMP + diphosphate + H(+). It participates in aminoacyl-tRNA biosynthesis; selenocysteinyl-tRNA(Sec) biosynthesis; L-seryl-tRNA(Sec) from L-serine and tRNA(Sec): step 1/1. Functionally, catalyzes the attachment of serine to tRNA(Ser). Is also able to aminoacylate tRNA(Sec) with serine, to form the misacylated tRNA L-seryl-tRNA(Sec), which will be further converted into selenocysteinyl-tRNA(Sec). This Vibrio cholerae serotype O1 (strain ATCC 39541 / Classical Ogawa 395 / O395) protein is Serine--tRNA ligase.